Consider the following 309-residue polypeptide: Methionyl-tRNA formyltransferase (309 aa).

107–110 (SLLP) contributes to the (6S)-5,6,7,8-tetrahydrofolate binding site.

The protein belongs to the Fmt family.

The catalysed reaction is L-methionyl-tRNA(fMet) + (6R)-10-formyltetrahydrofolate = N-formyl-L-methionyl-tRNA(fMet) + (6S)-5,6,7,8-tetrahydrofolate + H(+). Its function is as follows. Attaches a formyl group to the free amino group of methionyl-tRNA(fMet). The formyl group appears to play a dual role in the initiator identity of N-formylmethionyl-tRNA by promoting its recognition by IF2 and preventing the misappropriation of this tRNA by the elongation apparatus. This chain is Methionyl-tRNA formyltransferase, found in Borrelia duttonii (strain Ly).